The sequence spans 158 residues: Osmosensory protein A (158 aa).

A Phosphothreonine; by PknD modification is found at Thr2. The 112-residue stretch at 28–139 folds into the STAS domain; sequence AQIRAYLHHL…RSVHKALHDL (112 aa).

This sequence belongs to the anti-sigma-factor antagonist family. As to quaternary structure, interacts with Rv2638. Phosphorylation abolishes binding to Rv2638. Phosphorylated on Thr-2 by the serine/threonine-protein kinase PknD. Also phosphorylated to a lesser extent by PknB and PknE. Dephosphorylated by PstP.

Its activity is regulated as follows. Regulated by PknD under osmotic stress. Its function is as follows. Part of a signaling pathway that enables adaptation to osmotic stress through cell wall remodeling and virulence factor production. Unphosphorylated OprA forms a complex with the anti-anti-sigma-factor paralog Rv2638 that dissociates on OprA phosphorylation by PknD. Phosphorylation of OprA may stimulate the release of SigF from an inhibitory complex and enable the transcription of osmotically regulated genes, such as oprA and the ESX-1-associated virulence factor espA. This Mycobacterium tuberculosis (strain ATCC 25618 / H37Rv) protein is Osmosensory protein A.